Consider the following 155-residue polypeptide: SsrA-binding protein (155 aa).

This sequence belongs to the SmpB family.

Its subcellular location is the cytoplasm. Its function is as follows. Required for rescue of stalled ribosomes mediated by trans-translation. Binds to transfer-messenger RNA (tmRNA), required for stable association of tmRNA with ribosomes. tmRNA and SmpB together mimic tRNA shape, replacing the anticodon stem-loop with SmpB. tmRNA is encoded by the ssrA gene; the 2 termini fold to resemble tRNA(Ala) and it encodes a 'tag peptide', a short internal open reading frame. During trans-translation Ala-aminoacylated tmRNA acts like a tRNA, entering the A-site of stalled ribosomes, displacing the stalled mRNA. The ribosome then switches to translate the ORF on the tmRNA; the nascent peptide is terminated with the 'tag peptide' encoded by the tmRNA and targeted for degradation. The ribosome is freed to recommence translation, which seems to be the essential function of trans-translation. The chain is SsrA-binding protein from Streptococcus equi subsp. zooepidemicus (strain H70).